We begin with the raw amino-acid sequence, 376 residues long: Alcohol dehydrogenase class-3 (376 aa).

At Ser-1 the chain carries N-acetylserine. Zn(2+) is bound by residues Cys-47, His-69, Cys-99, Cys-102, Cys-105, Cys-113, and Cys-176.

Belongs to the zinc-containing alcohol dehydrogenase family. Class-III subfamily. In terms of assembly, homodimer. The cofactor is Zn(2+). Liver and gut.

The protein resides in the cytoplasm. The catalysed reaction is a primary alcohol + NAD(+) = an aldehyde + NADH + H(+). It carries out the reaction a secondary alcohol + NAD(+) = a ketone + NADH + H(+). The enzyme catalyses S-(hydroxymethyl)glutathione + NADP(+) = S-formylglutathione + NADPH + H(+). It catalyses the reaction S-(hydroxymethyl)glutathione + NAD(+) = S-formylglutathione + NADH + H(+). The catalysed reaction is S-nitrosoglutathione + NADH + H(+) = S-(hydroxysulfenamide)glutathione + NAD(+). Functionally, class-III ADH is remarkably ineffective in oxidizing ethanol, but it readily catalyzes the oxidation of long-chain primary alcohols and the oxidation of S-(hydroxymethyl) glutathione. Also acts as a S-nitroso-glutathione reductase by catalyzing the NADH-dependent reduction of S-nitrosoglutathione, thereby regulating protein S-nitrosylation. The chain is Alcohol dehydrogenase class-3 from Myxine glutinosa (Atlantic hagfish).